The following is a 195-amino-acid chain: Keratin-associated protein 4-3 (195 aa).

28 repeat units span residues 34–38, 39–43, 44–48, 49–53, 54–58, 59–63, 64–68, 69–73, 74–78, 79–83, 84–88, 89–93, 94–98, 99–103, 104–108, 109–113, 114–118, 119–123, 124–128, 129–133, 134–138, 144–148, 149–153, 154–158, 159–163, 164–168, 179–183, and 189–193. The interval 34–193 is 29 X 5 AA repeats of C-C-[GIKRQVH]-[SPT]-[STA]; the sequence is CCRTTCCRPS…CFHPICCGSS (160 aa).

It belongs to the KRTAP type 4 family. In terms of assembly, interacts with hair keratins. As to expression, expressed specifically in the middle/uper portions of the hair cortex. Not detected in the hair matrix or cuticle.

In the hair cortex, hair keratin intermediate filaments are embedded in an interfilamentous matrix, consisting of hair keratin-associated proteins (KRTAP), which are essential for the formation of a rigid and resistant hair shaft through their extensive disulfide bond cross-linking with abundant cysteine residues of hair keratins. The matrix proteins include the high-sulfur and high-glycine-tyrosine keratins. The polypeptide is Keratin-associated protein 4-3 (KRTAP4-3) (Homo sapiens (Human)).